Here is a 105-residue protein sequence, read N- to C-terminus: Large ribosomal subunit protein uL24 (105 aa).

This sequence belongs to the universal ribosomal protein uL24 family. As to quaternary structure, part of the 50S ribosomal subunit.

In terms of biological role, one of two assembly initiator proteins, it binds directly to the 5'-end of the 23S rRNA, where it nucleates assembly of the 50S subunit. Its function is as follows. One of the proteins that surrounds the polypeptide exit tunnel on the outside of the subunit. The chain is Large ribosomal subunit protein uL24 from Xanthomonas campestris pv. campestris (strain 8004).